Reading from the N-terminus, the 345-residue chain is Protein RecA (345 aa).

65-72 (GPESSGKT) serves as a coordination point for ATP.

This sequence belongs to the RecA family.

It localises to the cytoplasm. Its function is as follows. Can catalyze the hydrolysis of ATP in the presence of single-stranded DNA, the ATP-dependent uptake of single-stranded DNA by duplex DNA, and the ATP-dependent hybridization of homologous single-stranded DNAs. It interacts with LexA causing its activation and leading to its autocatalytic cleavage. In Stenotrophomonas maltophilia (strain R551-3), this protein is Protein RecA.